We begin with the raw amino-acid sequence, 147 residues long: UPF0306 protein YhbP (147 aa).

Belongs to the UPF0306 family.

The chain is UPF0306 protein YhbP from Escherichia fergusonii (strain ATCC 35469 / DSM 13698 / CCUG 18766 / IAM 14443 / JCM 21226 / LMG 7866 / NBRC 102419 / NCTC 12128 / CDC 0568-73).